The primary structure comprises 408 residues: Glyceraldehyde-3-phosphate dehydrogenase, testis-specific (408 aa).

The testis-specific N-terminal extension stretch occupies residues M1–A73. The tract at residues Q19–K68 is disordered. Positions P53 to K68 are enriched in pro residues. NAD(+) is bound by residues R85–I86, D106, K151, Y173, and S193. Residues S223–T225, T254, T283–G284, and R306 contribute to the D-glyceraldehyde 3-phosphate site. C224 (nucleophile) is an active-site residue. N388 contributes to the NAD(+) binding site.

It belongs to the glyceraldehyde-3-phosphate dehydrogenase family. Homotetramer. Interacts with ARRB2; the interaction is detected in the nucleus upon OR1D2 stimulation. As to expression, testis specific.

It is found in the cytoplasm. The catalysed reaction is D-glyceraldehyde 3-phosphate + phosphate + NAD(+) = (2R)-3-phospho-glyceroyl phosphate + NADH + H(+). Its pathway is carbohydrate degradation; glycolysis; pyruvate from D-glyceraldehyde 3-phosphate: step 1/5. May play an important role in regulating the switch between different pathways for energy production during spermiogenesis and in the spermatozoon. Required for sperm motility and male fertility. The polypeptide is Glyceraldehyde-3-phosphate dehydrogenase, testis-specific (GAPDHS) (Homo sapiens (Human)).